The primary structure comprises 751 residues: 1,3-beta-galactosyl-N-acetylhexosamine phosphorylase (751 aa).

Catalysis depends on aspartate 313, which acts as the Proton donor.

It belongs to the glycoside hydrolase 112 family. In terms of assembly, homodimer.

The catalysed reaction is beta-D-galactosyl-(1-&gt;3)-N-acetyl-D-glucosamine + phosphate = alpha-D-galactose 1-phosphate + N-acetyl-D-glucosamine. Functionally, reversibly phosphorolyzes lacto-N-biose to Gal1-P and N-acetylglucosamine (GlcNAc) and galacto-N-biose to Gal1-P and N-acetylgalactosamine (GalNAc). Involved in the lacto-N-biose I/galacto-N-biose (LNB/GNB) degradation pathway, which is important for host intestinal colonization by bifidobacteria. The protein is 1,3-beta-galactosyl-N-acetylhexosamine phosphorylase (lnpA) of Bifidobacterium longum subsp. longum (strain ATCC 15707 / DSM 20219 / JCM 1217 / NCTC 11818 / E194b).